We begin with the raw amino-acid sequence, 457 residues long: tRNA modification GTPase MnmE (457 aa).

Arginine 24, glutamate 81, and lysine 124 together coordinate (6S)-5-formyl-5,6,7,8-tetrahydrofolate. Residues 220 to 379 (GIQLVLAGAP…LKQKILHVVG (160 aa)) form the TrmE-type G domain. A K(+)-binding site is contributed by asparagine 230. GTP-binding positions include 230 to 235 (NVGKSS), 249 to 255 (TPIAGTT), and 274 to 277 (DTAG). Serine 234 contacts Mg(2+). Residues threonine 249, isoleucine 251, and threonine 254 each contribute to the K(+) site. Threonine 255 provides a ligand contact to Mg(2+). Lysine 457 provides a ligand contact to (6S)-5-formyl-5,6,7,8-tetrahydrofolate.

Belongs to the TRAFAC class TrmE-Era-EngA-EngB-Septin-like GTPase superfamily. TrmE GTPase family. In terms of assembly, homodimer. Heterotetramer of two MnmE and two MnmG subunits. It depends on K(+) as a cofactor.

Its subcellular location is the cytoplasm. In terms of biological role, exhibits a very high intrinsic GTPase hydrolysis rate. Involved in the addition of a carboxymethylaminomethyl (cmnm) group at the wobble position (U34) of certain tRNAs, forming tRNA-cmnm(5)s(2)U34. The chain is tRNA modification GTPase MnmE from Polynucleobacter asymbioticus (strain DSM 18221 / CIP 109841 / QLW-P1DMWA-1) (Polynucleobacter necessarius subsp. asymbioticus).